Reading from the N-terminus, the 1215-residue chain is Chromosome segregation protein sudA (1215 aa).

32–39 (GRNGSGKS) provides a ligand contact to ATP. The stretch at 177-522 (KIMHETNSKR…LSQMMDHNTS (346 aa)) forms a coiled coil. The segment at 313-332 (SDNQAAAQESKARHDESLKA) is disordered. The SMC hinge domain occupies 538-650 (EGVYGTLAEL…PNLQVASQYA (113 aa)). Positions 654–676 (GVNATTPEGDRSDKRGALTGGFH) are disordered. Positions 684-1091 (DAVKNLAKWR…EEAKHSVENY (408 aa)) form a coiled coil.

This sequence belongs to the SMC family. SMC3 subfamily.

It localises to the nucleus. Involved in chromosome segregation in mitosis. The protein is Chromosome segregation protein sudA (sudA) of Emericella nidulans (strain FGSC A4 / ATCC 38163 / CBS 112.46 / NRRL 194 / M139) (Aspergillus nidulans).